The sequence spans 436 residues: Hydroxycinnamoyltransferase (436 aa).

Active-site proton acceptor residues include histidine 154 and aspartate 383.

The protein belongs to the plant acyltransferase family. Mostly expressed in stems, and, to a lower extent, in bulbs.

It participates in phenylpropanoid metabolism. In terms of biological role, hydroxycinnamoyl transferase that catalyzes the transfer of an acyl from p-coumaryol-CoA to various acyl acceptors. Can use feruloyl-CoA and caffeoyl-CoA as acyl donors. This Narcissus pseudonarcissus (Daffodil) protein is Hydroxycinnamoyltransferase.